Consider the following 288-residue polypeptide: Stage IV sporulation protein FB (288 aa).

Over 1-10 (MNKWLDLILK) the chain is Mother cell cytoplasmic. The chain crosses the membrane as a helical span at residues 11-30 (IHVHPFLWIIAALGLLTGHM). Lys-31 is a topological domain (forespore intermembrane space). Residues 32 to 56 (ALLCLLLIVLIHELGHAALAVFFSW) traverse the membrane as a helical segment. His-43 is a Zn(2+) binding site. Glu-44 is an active-site residue. Position 47 (His-47) interacts with Zn(2+). The Mother cell cytoplasmic portion of the chain corresponds to 57-83 (RIKRVFLLPFGGTVEVEEHGNRPLKEE). A helical transmembrane segment spans residues 84–105 (FAVIIAGPLQHIWLQFAAWMLA). The Forespore intermembrane space portion of the chain corresponds to 106 to 126 (EVSVIHQHTFELFTFYNLSIL). The chain crosses the membrane as a helical span at residues 127-146 (FVNLLPIWPLDGGKLLFLLF). Asp-137 serves as a coordination point for Zn(2+). The Mother cell cytoplasmic portion of the chain corresponds to 147–161 (SKQLPFQKAHRLNLK). The chain crosses the membrane as a helical span at residues 162 to 178 (TSLCFCLLLGCWVLFVI). A topological domain (forespore intermembrane space) is located at residue Pro-179. Residues 180–199 (LQISAWVLFVFLAVSLFEEY) form a helical membrane-spanning segment. Over 200 to 288 (RQRHYIHVRF…SSMEELLLPY (89 aa)) the chain is Mother cell cytoplasmic.

It belongs to the peptidase M50B family. As to quaternary structure, forms a complex with SpoIVFA and BofA localized in the mother-cell membrane surrounding the forespore. The cofactor is Zn(2+).

It is found in the forespore outer membrane. Implicated in the coupling of mother cell to forespore gene expression. Required for spore formation. Processes the pro-sigma K factor. In Bacillus subtilis (strain 168), this protein is Stage IV sporulation protein FB (spoIVFB).